Consider the following 462-residue polypeptide: MNAAHLSLAEHAARLRRRELTAVALIDTCAQHHARMEPRLNAYKTWDGARARSAAAAVDTLLDQGQDLGPLMGLPVSVKDLYGVPGLPVFAGSDEALPEAWQAAGPLVARLQRQLGIVVGKTHTVEFAFGGLGVNAHWGTPRNPWSPHEHRVPGGSSAGAGVSLVQGSALLALGTDTAGSVRVPASMTGQVGLKTTVGRWPVEGIVPLSSSLDTAGVLTRTVEDLAYAFAALDTESQGLPAPAPVRVQGLRVGVPTNHFWDDIDPSIAAAVEAAVQRLAQAGAQVVRFPLPHCEEAFDIFRRGGLAASELAAYLDQHFPHKVERLDPVVRDRVRWAEQVSSVEYLRRKAVLQRCGAGAARLFDDVDVLLTPTVPASPPRLADIGTVETYAPANMKAMRNTAISNLFGWCALTMPVGLDANRMPVGLQLMGPPRAEARLIGIALGIEALIGQGHALLGAPDLP.

Active-site charge relay system residues include Lys-79 and Ser-156. The Acyl-ester intermediate role is filled by Ser-180.

The protein belongs to the amidase family.

The catalysed reaction is (2Z,4E)-2-aminomuconate + H2O = (3E)-2-oxohex-3-enedioate + NH4(+). It participates in xenobiotic degradation; nitrobenzene degradation. Its pathway is xenobiotic degradation; 4-chloronitrobenzene degradation. In terms of biological role, involved in the biodegradation of nitroaromatic and chlorinated nitroaromatic compounds. Catalyzes the conversion of 2-amino-5-chloromuconic acid into 2-hydroxy-5-chloromuconic acid and ammonia. Also able to catalyze the transformation of 2-aminomuconic acid into 2-hydroxymuconic acid. This chain is 2-amino-5-chloromuconic acid deaminase, found in Comamonas testosteroni (Pseudomonas testosteroni).